A 300-amino-acid chain; its full sequence is Ribosomal protein L11 methyltransferase (300 aa).

The S-adenosyl-L-methionine site is built by threonine 147, glycine 168, aspartate 190, and asparagine 236.

It belongs to the methyltransferase superfamily. PrmA family.

It localises to the cytoplasm. The enzyme catalyses L-lysyl-[protein] + 3 S-adenosyl-L-methionine = N(6),N(6),N(6)-trimethyl-L-lysyl-[protein] + 3 S-adenosyl-L-homocysteine + 3 H(+). Functionally, methylates ribosomal protein L11. The chain is Ribosomal protein L11 methyltransferase from Leptospira interrogans serogroup Icterohaemorrhagiae serovar Lai (strain 56601).